Here is a 272-residue protein sequence, read N- to C-terminus: Phosphate import ATP-binding protein PstB 1 (272 aa).

The ABC transporter domain maps to 26–267 (ISIENLNLFY…PMKKQTEDYI (242 aa)). Residue 58-65 (GPSGCGKS) coordinates ATP.

It belongs to the ABC transporter superfamily. Phosphate importer (TC 3.A.1.7) family. As to quaternary structure, the complex is composed of two ATP-binding proteins (PstB), two transmembrane proteins (PstC and PstA) and a solute-binding protein (PstS).

The protein localises to the cell inner membrane. The enzyme catalyses phosphate(out) + ATP + H2O = ADP + 2 phosphate(in) + H(+). Functionally, part of the ABC transporter complex PstSACB involved in phosphate import. Responsible for energy coupling to the transport system. This Vibrio parahaemolyticus serotype O3:K6 (strain RIMD 2210633) protein is Phosphate import ATP-binding protein PstB 1.